Here is a 402-residue protein sequence, read N- to C-terminus: Type II NADH:quinone oxidoreductase (402 aa).

FAD contacts are provided by residues 12 to 16 (GAGYA), 39 to 40 (NK), and Val-83. Residue Glu-172 is part of the active site. Residues Asp-302, 319 to 320 (AQ), and Lys-379 contribute to the FAD site.

The protein belongs to the NADH dehydrogenase family. The cofactor is FAD.

The protein localises to the cell membrane. It catalyses the reaction a quinone + NADH + H(+) = a quinol + NAD(+). Functionally, alternative, nonproton pumping NADH:quinone oxidoreductase that delivers electrons to the respiratory chain by oxidation of NADH and reduction of quinones, and contributes to the regeneration of NAD(+). This is Type II NADH:quinone oxidoreductase from Staphylococcus saprophyticus subsp. saprophyticus (strain ATCC 15305 / DSM 20229 / NCIMB 8711 / NCTC 7292 / S-41).